The chain runs to 506 residues: Notoamide biosynthesis cluster transcriptional coactivator notQ' (506 aa).

A DNA-binding region (zn(2)-C6 fungal-type) is located at residues 11–38 (CLVCRHRKVACDRGRPQCGLCRKNGFDC). Residues 73 to 102 (GRLSQSQPSQPATERDDLATTPSTGRLAPP) form a disordered region. Polar residues predominate over residues 75-84 (LSQSQPSQPA).

It is found in the nucleus. Its function is as follows. Transcription factor that probably regulates the expression of the gene cluster that mediates the biosynthesis of notoamide, a fungal indole alkaloid that belongs to a family of natural products containing a characteristic bicyclo[2.2.2]diazaoctane core. This chain is Notoamide biosynthesis cluster transcriptional coactivator notQ', found in Aspergillus versicolor.